The primary structure comprises 115 residues: Tyrosine-protein phosphatase 24 (115 aa).

Positions 1–115 constitute a Tyrosine-protein phosphatase domain; the sequence is WMMIVEQKCR…ETGSDAPMVV (115 aa). Asp-83 contacts substrate.

The protein belongs to the protein-tyrosine phosphatase family.

It carries out the reaction O-phospho-L-tyrosyl-[protein] + H2O = L-tyrosyl-[protein] + phosphate. The protein is Tyrosine-protein phosphatase 24 (STY-24) of Styela plicata (Wrinkled sea squirt).